The chain runs to 414 residues: MEVEVKAKQAKAAARRMAVLDENTKNLALNHMADALIKDIGKILEANKKDVVEAEKRNIKASLIDRLKLDEKRVEAMAKGLREISALPDPVGSIEKMWKRPNGLQIGKMRVPIGVIGIIYESRPNVTADAAGLCLKSGNAVILRGGSDAINSNIAISSILAKAAYETGIPEGAIQLIENTDREEVNRMMKLNGLIDLIIPRGGASLIKNVIENSTVPVIETGVGNCHIFVDETAKFNMAKDIIVNAKVQRPGVCNAVETVLVHKSIAKEFLPLMVEELTSLGVEIRGCQITKEICPQVKEATDKDWETEYLDLILAVKVVDGIEEALDHISKYSTGHSESIITENYENAMMFLKSVDSAAVYVNASTRFTDGGEFGFGAEIGISTQKMHARGPMGLEELTTYKYVILGSGQIRK.

The protein belongs to the gamma-glutamyl phosphate reductase family.

The protein localises to the cytoplasm. The enzyme catalyses L-glutamate 5-semialdehyde + phosphate + NADP(+) = L-glutamyl 5-phosphate + NADPH + H(+). It participates in amino-acid biosynthesis; L-proline biosynthesis; L-glutamate 5-semialdehyde from L-glutamate: step 2/2. In terms of biological role, catalyzes the NADPH-dependent reduction of L-glutamate 5-phosphate into L-glutamate 5-semialdehyde and phosphate. The product spontaneously undergoes cyclization to form 1-pyrroline-5-carboxylate. The protein is Gamma-glutamyl phosphate reductase of Thermoanaerobacter pseudethanolicus (strain ATCC 33223 / 39E) (Clostridium thermohydrosulfuricum).